Here is a 389-residue protein sequence, read N- to C-terminus: Phosphoglycerate kinase (389 aa).

Residues 21 to 23, Arg36, 59 to 62, Arg112, and Arg145 each bind substrate; these read DLN and HLGR. ATP contacts are provided by residues Lys196, Glu313, and 342 to 345; that span reads GGDT.

It belongs to the phosphoglycerate kinase family. In terms of assembly, monomer.

Its subcellular location is the cytoplasm. The enzyme catalyses (2R)-3-phosphoglycerate + ATP = (2R)-3-phospho-glyceroyl phosphate + ADP. It functions in the pathway carbohydrate degradation; glycolysis; pyruvate from D-glyceraldehyde 3-phosphate: step 2/5. In Mannheimia succiniciproducens (strain KCTC 0769BP / MBEL55E), this protein is Phosphoglycerate kinase.